The sequence spans 211 residues: Thiamine-phosphate synthase (211 aa).

Residues 37–41 (QLRIK) and N69 contribute to the 4-amino-2-methyl-5-(diphosphooxymethyl)pyrimidine site. Residues D70 and D89 each contribute to the Mg(2+) site. S108 serves as a coordination point for 4-amino-2-methyl-5-(diphosphooxymethyl)pyrimidine. 134-136 (TQT) is a 2-[(2R,5Z)-2-carboxy-4-methylthiazol-5(2H)-ylidene]ethyl phosphate binding site. Residue K137 coordinates 4-amino-2-methyl-5-(diphosphooxymethyl)pyrimidine. 2-[(2R,5Z)-2-carboxy-4-methylthiazol-5(2H)-ylidene]ethyl phosphate-binding positions include G166 and 186-187 (VS).

This sequence belongs to the thiamine-phosphate synthase family. Mg(2+) is required as a cofactor.

The enzyme catalyses 2-[(2R,5Z)-2-carboxy-4-methylthiazol-5(2H)-ylidene]ethyl phosphate + 4-amino-2-methyl-5-(diphosphooxymethyl)pyrimidine + 2 H(+) = thiamine phosphate + CO2 + diphosphate. The catalysed reaction is 2-(2-carboxy-4-methylthiazol-5-yl)ethyl phosphate + 4-amino-2-methyl-5-(diphosphooxymethyl)pyrimidine + 2 H(+) = thiamine phosphate + CO2 + diphosphate. It catalyses the reaction 4-methyl-5-(2-phosphooxyethyl)-thiazole + 4-amino-2-methyl-5-(diphosphooxymethyl)pyrimidine + H(+) = thiamine phosphate + diphosphate. Its pathway is cofactor biosynthesis; thiamine diphosphate biosynthesis; thiamine phosphate from 4-amino-2-methyl-5-diphosphomethylpyrimidine and 4-methyl-5-(2-phosphoethyl)-thiazole: step 1/1. Condenses 4-methyl-5-(beta-hydroxyethyl)thiazole monophosphate (THZ-P) and 2-methyl-4-amino-5-hydroxymethyl pyrimidine pyrophosphate (HMP-PP) to form thiamine monophosphate (TMP). The protein is Thiamine-phosphate synthase of Escherichia coli O139:H28 (strain E24377A / ETEC).